A 287-amino-acid chain; its full sequence is ATP synthase gamma chain (287 aa).

It belongs to the ATPase gamma chain family. As to quaternary structure, F-type ATPases have 2 components, CF(1) - the catalytic core - and CF(0) - the membrane proton channel. CF(1) has five subunits: alpha(3), beta(3), gamma(1), delta(1), epsilon(1). CF(0) has three main subunits: a, b and c.

The protein localises to the cell inner membrane. In terms of biological role, produces ATP from ADP in the presence of a proton gradient across the membrane. The gamma chain is believed to be important in regulating ATPase activity and the flow of protons through the CF(0) complex. This chain is ATP synthase gamma chain, found in Citrobacter koseri (strain ATCC BAA-895 / CDC 4225-83 / SGSC4696).